A 149-amino-acid chain; its full sequence is Large ribosomal subunit protein uL13 (149 aa).

It belongs to the universal ribosomal protein uL13 family. Part of the 50S ribosomal subunit.

This protein is one of the early assembly proteins of the 50S ribosomal subunit, although it is not seen to bind rRNA by itself. It is important during the early stages of 50S assembly. This Chlorobium limicola (strain DSM 245 / NBRC 103803 / 6330) protein is Large ribosomal subunit protein uL13.